Here is a 78-residue protein sequence, read N- to C-terminus: Acyl carrier protein (78 aa).

The region spanning D2 to V77 is the Carrier domain. O-(pantetheine 4'-phosphoryl)serine is present on S37.

It belongs to the acyl carrier protein (ACP) family. Post-translationally, 4'-phosphopantetheine is transferred from CoA to a specific serine of apo-ACP by AcpS. This modification is essential for activity because fatty acids are bound in thioester linkage to the sulfhydryl of the prosthetic group.

It is found in the cytoplasm. The protein operates within lipid metabolism; fatty acid biosynthesis. Its function is as follows. Carrier of the growing fatty acid chain in fatty acid biosynthesis. In Treponema pallidum (strain Nichols), this protein is Acyl carrier protein.